The chain runs to 543 residues: CTP synthase (543 aa).

Residues 1-265 are amidoligase domain; it reads MTRYIFVTGG…DDYVVERFGL (265 aa). Ser-13 contributes to the CTP binding site. Residue Ser-13 coordinates UTP. ATP-binding positions include 14–19 and Asp-71; that span reads SLGKGI. Asp-71 and Glu-139 together coordinate Mg(2+). CTP-binding positions include 146-148, 186-191, and Lys-222; these read DIE and KTKPTQ. Residues 186–191 and Lys-222 each bind UTP; that span reads KTKPTQ. The region spanning 290 to 541 is the Glutamine amidotransferase type-1 domain; the sequence is NIAMVGKYME…VNAALEYKAK (252 aa). An L-glutamine-binding site is contributed by Gly-351. Cys-378 (nucleophile; for glutamine hydrolysis) is an active-site residue. Residues 379 to 382, Glu-402, and Arg-469 each bind L-glutamine; that span reads LGMQ. Catalysis depends on residues His-514 and Glu-516.

This sequence belongs to the CTP synthase family. As to quaternary structure, homotetramer.

It catalyses the reaction UTP + L-glutamine + ATP + H2O = CTP + L-glutamate + ADP + phosphate + 2 H(+). The catalysed reaction is L-glutamine + H2O = L-glutamate + NH4(+). The enzyme catalyses UTP + NH4(+) + ATP = CTP + ADP + phosphate + 2 H(+). It functions in the pathway pyrimidine metabolism; CTP biosynthesis via de novo pathway; CTP from UDP: step 2/2. With respect to regulation, allosterically activated by GTP, when glutamine is the substrate; GTP has no effect on the reaction when ammonia is the substrate. The allosteric effector GTP functions by stabilizing the protein conformation that binds the tetrahedral intermediate(s) formed during glutamine hydrolysis. Inhibited by the product CTP, via allosteric rather than competitive inhibition. Functionally, catalyzes the ATP-dependent amination of UTP to CTP with either L-glutamine or ammonia as the source of nitrogen. Regulates intracellular CTP levels through interactions with the four ribonucleotide triphosphates. The chain is CTP synthase from Stutzerimonas stutzeri (strain A1501) (Pseudomonas stutzeri).